We begin with the raw amino-acid sequence, 788 residues long: Endonuclease MutS2 (788 aa).

332–339 contacts ATP; the sequence is GPNTGGKT. In terms of domain architecture, Smr spans 713 to 788; that stretch reads IDLRGLDSEE…GTGVTVVELK (76 aa).

Belongs to the DNA mismatch repair MutS family. MutS2 subfamily. Homodimer. Binds to stalled ribosomes, contacting rRNA.

Its function is as follows. Endonuclease that is involved in the suppression of homologous recombination and thus may have a key role in the control of bacterial genetic diversity. Functionally, acts as a ribosome collision sensor, splitting the ribosome into its 2 subunits. Detects stalled/collided 70S ribosomes which it binds and splits by an ATP-hydrolysis driven conformational change. Acts upstream of the ribosome quality control system (RQC), a ribosome-associated complex that mediates the extraction of incompletely synthesized nascent chains from stalled ribosomes and their subsequent degradation. Probably generates substrates for RQC. This is Endonuclease MutS2 from Clostridium acetobutylicum (strain ATCC 824 / DSM 792 / JCM 1419 / IAM 19013 / LMG 5710 / NBRC 13948 / NRRL B-527 / VKM B-1787 / 2291 / W).